The primary structure comprises 222 residues: Protein-L-isoaspartate O-methyltransferase (222 aa).

S73 is a catalytic residue.

The protein belongs to the methyltransferase superfamily. L-isoaspartyl/D-aspartyl protein methyltransferase family.

The protein resides in the cytoplasm. The catalysed reaction is [protein]-L-isoaspartate + S-adenosyl-L-methionine = [protein]-L-isoaspartate alpha-methyl ester + S-adenosyl-L-homocysteine. In terms of biological role, catalyzes the methyl esterification of L-isoaspartyl residues in peptides and proteins that result from spontaneous decomposition of normal L-aspartyl and L-asparaginyl residues. It plays a role in the repair and/or degradation of damaged proteins. The chain is Protein-L-isoaspartate O-methyltransferase from Chromobacterium violaceum (strain ATCC 12472 / DSM 30191 / JCM 1249 / CCUG 213 / NBRC 12614 / NCIMB 9131 / NCTC 9757 / MK).